The sequence spans 104 residues: Transcription factor ILI1 (104 aa).

Basic residues predominate over residues 1 to 11; it reads MSSSRRSRSRR. Residues 1-27 form a disordered region; sequence MSSSRRSRSRRAGSSVPSSSSSSRTSI. Residues 12-27 are compositionally biased toward low complexity; the sequence is AGSSVPSSSSSSRTSI. Positions 16–71 constitute a bHLH domain; it reads VPSSSSSSRTSISEDQIAELLSKLQALLPESQARNGAHRGSAARVLQETCSYIRSL.

Belongs to the bHLH protein family. As to quaternary structure, interacts with IBH1.

Functionally, atypical and probable non DNA-binding bHLH transcription factor that acts as a positive regulator of cell elongation and plant development. Binds the transcription repressor IBH1 and forms a heterodimer of antagonistic bHLH transcription factors that function downstream of BZR1 to mediate brassinosteroid regulation of cell elongation and lamina inclination. The polypeptide is Transcription factor ILI1 (ILI1) (Oryza sativa subsp. indica (Rice)).